Reading from the N-terminus, the 346-residue chain is DNA primase small subunit PriS (346 aa).

Active-site residues include Asp95 and Asp97. Cys106, His108, Cys114, and Cys117 together coordinate Zn(2+). The Zinc knuckle motif motif lies at 106 to 117 (CEHEPGTVCPIC). The active site involves Asp280.

This sequence belongs to the eukaryotic-type primase small subunit family. As to quaternary structure, heterodimer of a small subunit (PriS) and a large subunit (PriL). Requires Mg(2+) as cofactor. It depends on Mn(2+) as a cofactor.

Functionally, catalytic subunit of DNA primase, an RNA polymerase that catalyzes the synthesis of short RNA molecules used as primers for DNA polymerase during DNA replication. The small subunit contains the primase catalytic core and has DNA synthesis activity on its own. Binding to the large subunit stabilizes and modulates the activity, increasing the rate of DNA synthesis while decreasing the length of the DNA fragments, and conferring RNA synthesis capability. The DNA polymerase activity may enable DNA primase to also catalyze primer extension after primer synthesis. May also play a role in DNA repair. The chain is DNA primase small subunit PriS from Pyrococcus horikoshii (strain ATCC 700860 / DSM 12428 / JCM 9974 / NBRC 100139 / OT-3).